Here is a 348-residue protein sequence, read N- to C-terminus: MSRFWSPFVKDLVPYVPGEQPKLARLVKLNTNENPYGPSPKALEAMRGELNDNLRLYPDPNGDRLKQAVAEYYGVTPAQVFVGNGSDEVLAHIFHGLFQHDAPLLFPDISYSFYPVYCGLYGIAFEQVALDEQFQIRIEDYKKPNAGIIFPNPNAPTGCLMPLQAVEELLQANRDSVVVVDEAYIDFGGETAISLVDRYDNLLVTQTLSKSRSLAGLRVGLAVGHPDLIEALERIKNSFNSYPLDRAAIVGAAVAFEDREYFEETCRKVIDSREVLVGQLQAKGFEVLPSAANFIFARHPQQDAGELAARLREQGVIVRHFKQPRIAQFLRITIGTPEMNQALLDALS.

Position 210 is an N6-(pyridoxal phosphate)lysine (lysine 210).

This sequence belongs to the class-II pyridoxal-phosphate-dependent aminotransferase family. Histidinol-phosphate aminotransferase subfamily. In terms of assembly, homodimer. The cofactor is pyridoxal 5'-phosphate.

It carries out the reaction L-histidinol phosphate + 2-oxoglutarate = 3-(imidazol-4-yl)-2-oxopropyl phosphate + L-glutamate. It functions in the pathway amino-acid biosynthesis; L-histidine biosynthesis; L-histidine from 5-phospho-alpha-D-ribose 1-diphosphate: step 7/9. This chain is Histidinol-phosphate aminotransferase, found in Pseudomonas putida (strain ATCC 47054 / DSM 6125 / CFBP 8728 / NCIMB 11950 / KT2440).